A 558-amino-acid chain; its full sequence is Dihydroxy-acid dehydratase (558 aa).

A Mg(2+)-binding site is contributed by Asp78. A [2Fe-2S] cluster-binding site is contributed by Cys119. Mg(2+)-binding residues include Asp120 and Lys121. An N6-carboxylysine modification is found at Lys121. Cys191 contributes to the [2Fe-2S] cluster binding site. Residue Glu443 coordinates Mg(2+). The Proton acceptor role is filled by Ser469.

This sequence belongs to the IlvD/Edd family. In terms of assembly, homodimer. Requires [2Fe-2S] cluster as cofactor. The cofactor is Mg(2+).

It catalyses the reaction (2R)-2,3-dihydroxy-3-methylbutanoate = 3-methyl-2-oxobutanoate + H2O. The enzyme catalyses (2R,3R)-2,3-dihydroxy-3-methylpentanoate = (S)-3-methyl-2-oxopentanoate + H2O. It functions in the pathway amino-acid biosynthesis; L-isoleucine biosynthesis; L-isoleucine from 2-oxobutanoate: step 3/4. It participates in amino-acid biosynthesis; L-valine biosynthesis; L-valine from pyruvate: step 3/4. Functions in the biosynthesis of branched-chain amino acids. Catalyzes the dehydration of (2R,3R)-2,3-dihydroxy-3-methylpentanoate (2,3-dihydroxy-3-methylvalerate) into 2-oxo-3-methylpentanoate (2-oxo-3-methylvalerate) and of (2R)-2,3-dihydroxy-3-methylbutanoate (2,3-dihydroxyisovalerate) into 2-oxo-3-methylbutanoate (2-oxoisovalerate), the penultimate precursor to L-isoleucine and L-valine, respectively. In Solidesulfovibrio magneticus (strain ATCC 700980 / DSM 13731 / RS-1) (Desulfovibrio magneticus), this protein is Dihydroxy-acid dehydratase.